A 344-amino-acid chain; its full sequence is Probable Delta(7)-sterol 5(6)-desaturase (344 aa).

Transmembrane regions (helical) follow at residues 76–96, 123–143, and 160–180; these read LSLF…FASL, QTNA…VAEV, and WYDF…IYWI. The Fatty acid hydroxylase domain occupies 167–292; the sequence is PLFIMFTDFG…FTTLWDRLGG (126 aa). The Histidine box-1 motif lies at 181–185; the sequence is HRGLH. Positions 194–198 match the Histidine box-2 motif; the sequence is HKPHH. A helical transmembrane segment spans residues 224–244; it reads HIFPFIFPLQKMAYVGLFVFI. Positions 269-273 match the Histidine box-3 motif; that stretch reads HSVHH.

Belongs to the sterol desaturase family. Fe cation serves as cofactor.

It localises to the endoplasmic reticulum membrane. The enzyme catalyses a Delta(7)-sterol + 2 Fe(II)-[cytochrome b5] + O2 + 2 H(+) = a Delta(5),Delta(7)-sterol + 2 Fe(III)-[cytochrome b5] + 2 H2O. The protein operates within steroid metabolism; ergosterol biosynthesis; ergosterol from zymosterol: step 3/5. In terms of biological role, catalyzes the introduction of a C-5 double bond in the B ring of ergosterol. May contribute to the regulation of ergosterol biosynthesis. The chain is Probable Delta(7)-sterol 5(6)-desaturase from Neurospora crassa (strain ATCC 24698 / 74-OR23-1A / CBS 708.71 / DSM 1257 / FGSC 987).